Reading from the N-terminus, the 59-residue chain is Chromatin protein Cren7 (59 aa).

Belongs to the Cren7 family. In terms of assembly, monomer. In terms of processing, methylated at multiple sites, to varying extents.

It localises to the chromosome. Its subcellular location is the cytoplasm. Functionally, a chromatin protein, binds double-stranded DNA without sequence specificity. Constrains negative DNA supercoils. The polypeptide is Chromatin protein Cren7 (Pyrobaculum arsenaticum (strain DSM 13514 / JCM 11321 / PZ6)).